We begin with the raw amino-acid sequence, 2629 residues long: Protein DOP1 homolog (2629 aa).

Disordered regions lie at residues 561–584 (NKGV…SRLN), 605–652 (SASN…TPRS), 688–710 (AGNV…PQFY), 1278–1340 (MDES…SSSA), 1371–1395 (TYRL…QTEH), 1435–1471 (ISKT…ATDS), and 1766–1785 (RQDT…SPTR). Composition is skewed to polar residues over residues 605-615 (SASNQSVGRQS) and 636-647 (ASDTGQQSSSDL). The segment covering 1307–1320 (DITDNSDSSDFESD) has biased composition (acidic residues). Positions 1321-1333 (SELRETSLEKEDS) are enriched in basic and acidic residues. 2 stretches are compositionally biased toward polar residues: residues 1381-1391 (GENSLNSVATD) and 1435-1450 (ISKT…SCSQ).

The protein belongs to the DOP1 family.

Its subcellular location is the golgi apparatus membrane. May be involved in protein traffic between late Golgi and early endosomes. This chain is Protein DOP1 homolog, found in Drosophila pseudoobscura pseudoobscura (Fruit fly).